We begin with the raw amino-acid sequence, 323 residues long: Large ribosomal subunit protein uL10x (323 aa).

The segment at 287–323 is disordered; that stretch reads DAGGGSAQAGAAAKVEEKKEESDEEDYEGGFGLFDEE. Phosphoserine is present on S308. Residues 308–323 are compositionally biased toward acidic residues; that stretch reads SDEEDYEGGFGLFDEE. Y313 carries the phosphotyrosine modification.

This sequence belongs to the universal ribosomal protein uL10 family. P0 forms a pentameric complex by interaction with dimers of P1 and P2.

Functionally, ribosomal protein P0 is the functional equivalent of E.coli protein L10. This chain is Large ribosomal subunit protein uL10x (RPP0C), found in Arabidopsis thaliana (Mouse-ear cress).